The following is a 273-amino-acid chain: Dermonecrotic toxin LhSicTox-alphaIA2avii (273 aa).

The active site involves His5. Positions 25 and 27 each coordinate Mg(2+). The active-site Nucleophile is His41. 2 disulfide bridges follow: Cys45/Cys51 and Cys47/Cys190. Asp85 contributes to the Mg(2+) binding site.

This sequence belongs to the arthropod phospholipase D family. Class II subfamily. Mg(2+) is required as a cofactor. In terms of tissue distribution, expressed by the venom gland.

Its subcellular location is the secreted. The enzyme catalyses an N-(acyl)-sphingosylphosphocholine = an N-(acyl)-sphingosyl-1,3-cyclic phosphate + choline. The catalysed reaction is an N-(acyl)-sphingosylphosphoethanolamine = an N-(acyl)-sphingosyl-1,3-cyclic phosphate + ethanolamine. It carries out the reaction a 1-acyl-sn-glycero-3-phosphocholine = a 1-acyl-sn-glycero-2,3-cyclic phosphate + choline. It catalyses the reaction a 1-acyl-sn-glycero-3-phosphoethanolamine = a 1-acyl-sn-glycero-2,3-cyclic phosphate + ethanolamine. In terms of biological role, dermonecrotic toxins cleave the phosphodiester linkage between the phosphate and headgroup of certain phospholipids (sphingolipid and lysolipid substrates), forming an alcohol (often choline) and a cyclic phosphate. This toxin acts on sphingomyelin (SM). It may also act on ceramide phosphoethanolamine (CPE), lysophosphatidylcholine (LPC) and lysophosphatidylethanolamine (LPE), but not on lysophosphatidylserine (LPS), and lysophosphatidylglycerol (LPG). It acts by transphosphatidylation, releasing exclusively cyclic phosphate products as second products. Induces dermonecrosis, hemolysis, increased vascular permeability, edema, inflammatory response, and platelet aggregation. The protein is Dermonecrotic toxin LhSicTox-alphaIA2avii of Loxosceles hirsuta (Recluse spider).